Reading from the N-terminus, the 474-residue chain is Synaptotagmin-17 (474 aa).

Positions 54 to 112 (PAQTPPWLVSNRSEDKEGDSDNTTSEPPATPQDTSPDRRRSSSDTSRSTYSLTRRISSL) are disordered. A compositionally biased stretch (low complexity) spans 96–112 (SDTSRSTYSLTRRISSL). C2 domains follow at residues 184–310 (QLGM…HWWK) and 321–455 (ELGE…EQWH).

Belongs to the synaptotagmin family.

It localises to the membrane. Functionally, may play a role in dendrite formation by melanocytes. The sequence is that of Synaptotagmin-17 (syt17) from Xenopus tropicalis (Western clawed frog).